A 118-amino-acid polypeptide reads, in one-letter code: Large ribosomal subunit protein bL19 (118 aa).

Belongs to the bacterial ribosomal protein bL19 family.

This protein is located at the 30S-50S ribosomal subunit interface and may play a role in the structure and function of the aminoacyl-tRNA binding site. The chain is Large ribosomal subunit protein bL19 (rplS) from Serratia marcescens.